We begin with the raw amino-acid sequence, 1066 residues long: E3 ubiquitin-protein ligase PDZRN3 (1066 aa).

The RING-type; degenerate zinc finger occupies 18–56; it reads CALCHKVLEDPLTTPCGHVFCAGCVLPWVVQEGSCPARC. Residues 100-158 form a TRAF-type zinc finger; that stretch reads EHLERCDFAPARCRHAGCGQVLLRRDVEAHMRDACDARPVGRCQEGCGLPLTHGEQRAG. PDZ domains follow at residues 249–339 and 419–503; these read TLVL…LRRT and EVDL…IARP. Position 427 is a phosphoserine (Ser427). Residues 545-603 are disordered; the sequence is QKKHDEDGGTTDTATILSNQHEKDSGVGRTDESTRNDESSEQENNGDDATASSNPLAGQ. Residues 554–563 are compositionally biased toward polar residues; sequence TTDTATILSN. The span at 564-582 shows a compositional bias: basic and acidic residues; sequence QHEKDSGVGRTDESTRNDE. The span at 594–603 shows a compositional bias: polar residues; it reads TASSNPLAGQ. Residues 679 to 704 adopt a coiled-coil conformation; that stretch reads ESVDKELELLNEELRSIELECLSIVR. Over residues 744-754 the composition is skewed to basic and acidic residues; it reads TELPEKSDKDS. 2 disordered regions span residues 744 to 778 and 808 to 863; these read TELP…PDNS and LLSI…LPSY. Composition is skewed to polar residues over residues 755 to 769 and 845 to 855; these read SSAY…STPL and GSRSPTPSQKL. The stretch at 975 to 1025 forms a coiled coil; sequence KEERKQHLVKAKEQRRRREFMMQSRLDCLKEQQAADDRKEMNILELSHKKM.

In terms of assembly, interacts with NLGN1 and EFNB2. Interacts with UBE2D2 and with MUSK via the first PDZ domain. In terms of processing, auto-ubiquitinated. As to expression, widely expressed, including in the heart, skeletal muscle and liver and, at lower levels, in the brain, colon, small intestine, placenta and lung. Down-regulated in ovarian serous papillary tumors.

The protein resides in the synapse. The protein localises to the cytoplasm. It carries out the reaction S-ubiquitinyl-[E2 ubiquitin-conjugating enzyme]-L-cysteine + [acceptor protein]-L-lysine = [E2 ubiquitin-conjugating enzyme]-L-cysteine + N(6)-ubiquitinyl-[acceptor protein]-L-lysine.. The protein operates within protein modification; protein ubiquitination. In terms of biological role, E3 ubiquitin-protein ligase. Plays an important role in regulating the surface level of MUSK on myotubes. Mediates the ubiquitination of MUSK, promoting its endocytosis and lysosomal degradation. Might contribute to terminal myogenic differentiation. The polypeptide is E3 ubiquitin-protein ligase PDZRN3 (PDZRN3) (Homo sapiens (Human)).